Here is a 217-residue protein sequence, read N- to C-terminus: Ranaspumin (217 aa).

4 disulfides stabilise this stretch: Cys18-Cys67, Cys38-Cys114, Cys125-Cys168, and Cys146-Cys207.

As to quaternary structure, monomer. In terms of tissue distribution, exclusively expressed in females in the early oviduct, the glandular part of the oviduct (pars convoluta dilata) and in the cloaca.

The protein resides in the secreted. Its function is as follows. Acts as a surfactant. Is the major protein constituent (45%) of foam nests. Has no antimicrobial activity, no larvicidal activity, and is not toxic to mice. The polypeptide is Ranaspumin (Leptodactylus vastus (Northeastern pepper frog)).